The sequence spans 412 residues: MNAEIIAVGTELLLGQITNTNAKFLSEKLASIGINVYYHTVVGDNTRRLQEAIRTAEKRANILIFTGGLGPTKDDLTKETIASIVKEDLVYDEAALTSIREYFNRTGREFTENNKKQALVLKGSTVFANNHGMAPGMGLHKNEKVYILLPGPPKEMQPMYNSYVDPFLRNVTTGEHIYSRVLRFFGIGESQLEVKVQDLIDNQTNPTIAPLASDGEVTLRLTAKHQNVEQAELLIQQVEHLILERVGEFFYGYNEDFLHHKAIELLKKKGFTLACAESLTGGLFGNQVTENAGVSSVFKGGVICYHNDVKQHILQVPEETLQTAGAVSEECARYLAENVKLLLQSDIGISFTGVAGPDASENKEPGTVFIGLAIKDEPTIVFPLCLSGSRQQIRERTVKYGFYHLYKKLEEM.

It belongs to the CinA family.

The polypeptide is Putative competence-damage inducible protein (Bacillus cytotoxicus (strain DSM 22905 / CIP 110041 / 391-98 / NVH 391-98)).